The following is a 148-amino-acid chain: MDVLEIMKIIPHRYPLLLVDKILEMELGKRIVGLKNVSVNEPFFQGHFPGYPLMPGVLMLEAMAQVGGILMIKSLGLEIGKYAVVFAGIDEARFKRPVYPGDQLIMELETISLKKTISKMKGTATVNNQVVAEAILMAAARELESIKK.

Residue His47 is part of the active site.

It belongs to the thioester dehydratase family. FabZ subfamily.

Its subcellular location is the cytoplasm. The catalysed reaction is a (3R)-hydroxyacyl-[ACP] = a (2E)-enoyl-[ACP] + H2O. In terms of biological role, involved in unsaturated fatty acids biosynthesis. Catalyzes the dehydration of short chain beta-hydroxyacyl-ACPs and long chain saturated and unsaturated beta-hydroxyacyl-ACPs. This Hydrogenobaculum sp. (strain Y04AAS1) protein is 3-hydroxyacyl-[acyl-carrier-protein] dehydratase FabZ.